A 61-amino-acid chain; its full sequence is U-poneritoxin(01)-Om5b (61 aa).

Positions 1–23 (MKLSALSLAFAIILMMTIMYTKA) are cleaved as a signal peptide. Residues 24-41 (DADASADAEADADAEAEA) constitute a propeptide that is removed on maturation. Glutamine 59 is modified (glutamine amide).

Belongs to the formicidae venom precursor-01 superfamily. Truncated sequences of this peptide have also been found in the venom. It is possible they have been cleaved in the venom. In terms of tissue distribution, expressed by the venom gland.

The protein resides in the secreted. In terms of biological role, acidic peptide with potent hemolytic activities. It also shows low antimicrobial activities against E.coli (MIC=50uM), as well as histamine-releasing activity (28.3% at 10 uM). Does not have activity against S.aureus, and S.cerevisiae. The sequence is that of U-poneritoxin(01)-Om5b from Odontomachus monticola (Trap-jaw ant).